We begin with the raw amino-acid sequence, 587 residues long: Proline-rich protein 14 (587 aa).

N-acetylmethionine is present on M1. The segment covering 1-11 (MDLPGDSSTPG) has biased composition (polar residues). Disordered stretches follow at residues 1–48 (MDLP…EKAS), 65–152 (VPLE…HQPT), and 181–241 (ARRA…RPRL). The tract at residues 1 to 135 (MDLPGDSSTP…TPRRQSRTTP (135 aa)) is sufficient for heterochromatin association in interphase and chromatin association in anaphase. The required for the interaction with GRB2 and sufficient to promote the phosphorylation of AKT and cell proliferation stretch occupies residues 85–378 (SVRSQPPASP…MAKAPPPPRP (294 aa)). The interval 136–365 (GPDEGPSQKV…RPRPRRHTVG (230 aa)) is required for nuclear lamina association. Low complexity predominate over residues 200–214 (LPAPSRPSALSANPL). The span at 215–234 (ASPPPAPDPVLEPPSTPPPS) shows a compositional bias: pro residues. Position 277 is a phosphoserine (S277). Disordered regions lie at residues 290–444 (EAGQ…IGKV) and 524–587 (FRDS…PHRT). The segment covering 314-325 (AQDQNPSATLTK) has biased composition (polar residues). The span at 337 to 356 (LGPPGPDPCSWPPVPAPSSR) shows a compositional bias: pro residues. The segment covering 398–410 (TSCSSTASTSSFS) has biased composition (low complexity). Residues 519–536 (RRTVEFRDSSLPRSRRPS) form a required for nuclear localization region. Positions 538-548 (GARATAGRTLP) are enriched in low complexity. Residues 572 to 581 (LLEEEEEGDQ) are compositionally biased toward acidic residues.

As to quaternary structure, interacts (via proline-rich region) with GRB2 (via SH3 domain 2). Interacts (via N-terminus) with CBX5.

It localises to the chromosome. The protein resides in the nucleus. Its subcellular location is the nucleus lamina. The protein localises to the nucleoplasm. In terms of biological role, functions in tethering peripheral heterochromatin to the nuclear lamina during interphase, possibly through the interaction with heterochromatin protein CBX5/HP1 alpha. Might play a role in reattaching heterochromatin to the nuclear lamina at mitotic exit. Promotes myoblast differentiation during skeletal myogenesis, possibly by stimulating transcription factor MyoD activity via binding to CBX5/HP1 alpha. Involved in the positive regulation of the PI3K-Akt-mTOR signaling pathway and in promoting cell proliferation, possibly via binding to GRB2. This chain is Proline-rich protein 14 (PRR14), found in Bos taurus (Bovine).